A 439-amino-acid chain; its full sequence is Xylose isomerase (439 aa).

Active-site residues include His-101 and Asp-104. The Mg(2+) site is built by Glu-232, Glu-268, His-271, Asp-296, Asp-307, Asp-309, and Asp-339.

The protein belongs to the xylose isomerase family. Homotetramer. It depends on Mg(2+) as a cofactor.

The protein localises to the cytoplasm. It catalyses the reaction alpha-D-xylose = alpha-D-xylulofuranose. The chain is Xylose isomerase (xylA) from Lactococcus lactis subsp. lactis (strain IL1403) (Streptococcus lactis).